Consider the following 71-residue polypeptide: UPF0499 protein ACLA_083080 (71 aa).

Positions 1-18 (MKFLNILTLAFITGMASA) are cleaved as a signal peptide. 3 disulfides stabilise this stretch: C44-C58, C48-C61, and C54-C68.

The protein belongs to the UPF0499 family.

It is found in the secreted. The chain is UPF0499 protein ACLA_083080 from Aspergillus clavatus (strain ATCC 1007 / CBS 513.65 / DSM 816 / NCTC 3887 / NRRL 1 / QM 1276 / 107).